The following is a 224-amino-acid chain: Retinoschisin (224 aa).

The signal sequence occupies residues 1 to 23 (MSRKIEGFLLLLLFGYEATLGLS). The region spanning 63 to 219 (CPYHKPLGFE…IAIRMELLEC (157 aa)) is the F5/8 type C domain. Cystine bridges form between Cys-63–Cys-219 and Cys-110–Cys-142.

Homooctamer of 4 homodimers; disulfide-linked. The homooctamer has a flat, cogwheel structure with a diameter of about 14 nm. Two stacked octamers can assemble to form a hexadecamer. In terms of tissue distribution, restricted to the retina (at protein level). Detected in the inner segment of the photoreceptors, the inner nuclear layer, the inner plexiform layer and the ganglion cell layer (at protein level). At the macula, expressed in both the outer and inner nuclear layers and in the inner plexiform layer (at protein level). Detected in retina. Detected only within the photoreceptor cell layer, most prominently within the inner segments of the photoreceptors. Undetectable in the inner plexiform layers and the inner nuclear layer.

It is found in the secreted. The protein localises to the cell membrane. In terms of biological role, binds negatively charged membrane lipids, such as phosphatidylserine and phosphoinositides. May play a role in cell-cell adhesion processes in the retina, via homomeric interaction between octamers present on the surface of two neighboring cells. Required for normal structure and function of the retina. This is Retinoschisin (RS1) from Homo sapiens (Human).